Consider the following 566-residue polypeptide: Bicarbonate transporter BicA (566 aa).

The Cytoplasmic segment spans residues 1–15 (MQITNKIHFRNIRGD). A helical membrane pass occupies residues 16–36 (IFGGLTAAVIALPMALAFGVA). Topologically, residues 37–42 (SGAGAE) are periplasmic. A helical transmembrane segment spans residues 43 to 63 (AGLWGAVLVGFFAALFGGTPT). A topological domain (cytoplasmic) is located at residue Leu-64. A helical membrane pass occupies residues 65–85 (ISEPTGPMTVVMTAVIAHFTA). Thr-69 contributes to the hydrogencarbonate binding site. Topologically, residues 86–93 (SAATPEEG) are periplasmic. The chain crosses the membrane as a helical span at residues 94–114 (LAIAFTVVMMAGVFQIIFGSL). Residues 115 to 126 (KLGKYVTMMPYT) are Cytoplasmic-facing. A helical transmembrane segment spans residues 127 to 147 (VISGFMSGIGIILVILQLAPF). The Periplasmic segment spans residues 148–169 (LGQASPGGGVIGTLQNLPTLLS). Residues 170-190 (NIQPGETALALGTVAIIWFMP) form a helical membrane-spanning segment. At 191–196 (EKFKKV) the chain is on the cytoplasmic side. Residues 197–217 (IPPQLVALVLGTVIAFFVFPP) traverse the membrane as a helical segment. Residues 218–247 (EVSDLRRIGEIRAGFPELVRPSFSPVEFQR) lie on the Periplasmic side of the membrane. The chain crosses the membrane as a helical span at residues 248–268 (MILDAAVLGMLGCIDALLTSV). Residues Asp-262, Thr-266, and Gly-304 each contribute to the Na(+) site. The Cytoplasmic portion of the chain corresponds to 269 to 318 (VADSLTRTEHNSNKELIGQGLGNLFSGLFGGIAGAGATMGTVVNIQSGGR). Hydrogencarbonate is bound at residue Ala-305. Thr-306 is a binding site for Na(+). A helical membrane pass occupies residues 319–339 (TALSGLVRAFVLLVVILGAAS). Position 340 (Leu-340) is a topological domain, periplasmic. The chain crosses the membrane as a helical span at residues 341–361 (TATIPLAVLAGIAFKVGVDII). Over 362–371 (DWSFLKRAHE) the chain is Cytoplasmic. The helical transmembrane segment at 372 to 392 (ISPKGALIMYGVILLTVLVDL) threads the bilayer. Ile-393 is a topological domain (periplasmic). Residues 394 to 414 (VAVGVGVFVANVLTIERMSNL) traverse the membrane as a helical segment. Topologically, residues 415–566 (QSEKVQTVSD…GVTAPSSEMG (152 aa)) are cytoplasmic. In terms of domain architecture, STAS spans 436-546 (KRWLDEGQGR…MSREEALKNA (111 aa)).

This sequence belongs to the SLC26A/SulP transporter (TC 2.A.53) family.

It is found in the cell inner membrane. In terms of biological role, low/medium affinity, Na(+)-dependent bicarbonate transporter. The sequence is that of Bicarbonate transporter BicA (bicA) from Picosynechococcus sp. (strain ATCC 27264 / PCC 7002 / PR-6) (Agmenellum quadruplicatum).